The primary structure comprises 313 residues: Protochlorophyllide reductase (313 aa).

It belongs to the short-chain dehydrogenases/reductases (SDR) family. POR subfamily.

Its subcellular location is the plastid. The protein resides in the chloroplast. It catalyses the reaction chlorophyllide a + NADP(+) = protochlorophyllide a + NADPH + H(+). It functions in the pathway porphyrin-containing compound metabolism; chlorophyll biosynthesis. Functionally, phototransformation of protochlorophyllide (Pchlide) to chlorophyllide (Chlide). In Avena sativa (Oat), this protein is Protochlorophyllide reductase.